The chain runs to 596 residues: Elongation factor 4 (596 aa).

Positions 2-184 (KHIRNFSIIA…MIVKDVPPPV (183 aa)) constitute a tr-type G domain. GTP contacts are provided by residues 14–19 (DHGKST) and 131–134 (NKID).

Belongs to the TRAFAC class translation factor GTPase superfamily. Classic translation factor GTPase family. LepA subfamily.

The protein resides in the cell inner membrane. The catalysed reaction is GTP + H2O = GDP + phosphate + H(+). Its function is as follows. Required for accurate and efficient protein synthesis under certain stress conditions. May act as a fidelity factor of the translation reaction, by catalyzing a one-codon backward translocation of tRNAs on improperly translocated ribosomes. Back-translocation proceeds from a post-translocation (POST) complex to a pre-translocation (PRE) complex, thus giving elongation factor G a second chance to translocate the tRNAs correctly. Binds to ribosomes in a GTP-dependent manner. This is Elongation factor 4 from Pseudoalteromonas translucida (strain TAC 125).